A 303-amino-acid chain; its full sequence is Enoyl-CoA hydratase domain-containing protein 3, mitochondrial (303 aa).

A mitochondrion-targeting transit peptide spans 1–17; the sequence is MAAVAVLRAFGASGPMC. Position 110 is an N6-succinyllysine (lysine 110).

It belongs to the enoyl-CoA hydratase/isomerase family. Expressed in adipocytes. Expressed in blood cells, with higher expression in patients with low coronary lesions.

The protein localises to the mitochondrion. Functionally, may play a role in fatty acid biosynthesis and insulin sensitivity. This chain is Enoyl-CoA hydratase domain-containing protein 3, mitochondrial, found in Homo sapiens (Human).